A 447-amino-acid polypeptide reads, in one-letter code: Probable glycine dehydrogenase (decarboxylating) subunit 1 (447 aa).

It belongs to the GcvP family. N-terminal subunit subfamily. The glycine cleavage system is composed of four proteins: P, T, L and H. In this organism, the P 'protein' is a heterodimer of two subunits.

It catalyses the reaction N(6)-[(R)-lipoyl]-L-lysyl-[glycine-cleavage complex H protein] + glycine + H(+) = N(6)-[(R)-S(8)-aminomethyldihydrolipoyl]-L-lysyl-[glycine-cleavage complex H protein] + CO2. Functionally, the glycine cleavage system catalyzes the degradation of glycine. The P protein binds the alpha-amino group of glycine through its pyridoxal phosphate cofactor; CO(2) is released and the remaining methylamine moiety is then transferred to the lipoamide cofactor of the H protein. In Halalkalibacterium halodurans (strain ATCC BAA-125 / DSM 18197 / FERM 7344 / JCM 9153 / C-125) (Bacillus halodurans), this protein is Probable glycine dehydrogenase (decarboxylating) subunit 1.